Reading from the N-terminus, the 227-residue chain is Probable septum site-determining protein MinC (227 aa).

The protein belongs to the MinC family. In terms of assembly, interacts with MinD and FtsZ.

Its function is as follows. Cell division inhibitor that blocks the formation of polar Z ring septums. Rapidly oscillates between the poles of the cell to destabilize FtsZ filaments that have formed before they mature into polar Z rings. Prevents FtsZ polymerization. This Photorhabdus laumondii subsp. laumondii (strain DSM 15139 / CIP 105565 / TT01) (Photorhabdus luminescens subsp. laumondii) protein is Probable septum site-determining protein MinC.